The primary structure comprises 151 residues: MKKEEMLVAAIRNGIVIDHIPPTKLFKVATLLQLDDLDKRITIGNNLRSRSHGSKGVIKIEDKTFEEEELNRIALIAPNVRLNIIRDYEVVEKRQVEVPHEIVGLVRCPNPKCITNNEPMQTRFRVIDAEQCTLRCDYCERKLAGDRIELL.

Zn(2+) is bound by residues Cys108, Cys113, Cys136, and Cys139.

This sequence belongs to the PyrI family. Contains catalytic and regulatory chains. Zn(2+) is required as a cofactor.

In terms of biological role, involved in allosteric regulation of aspartate carbamoyltransferase. The polypeptide is Aspartate carbamoyltransferase regulatory chain (Porphyromonas gingivalis (strain ATCC 33277 / DSM 20709 / CIP 103683 / JCM 12257 / NCTC 11834 / 2561)).